The following is a 396-amino-acid chain: Acetate kinase (396 aa).

A Mg(2+)-binding site is contributed by asparagine 8. ATP is bound at residue lysine 15. Substrate is bound at residue arginine 89. Aspartate 146 functions as the Proton donor/acceptor in the catalytic mechanism. Residues 206 to 210 (HIGNG), 283 to 285 (DMR), and 331 to 335 (GVGEN) contribute to the ATP site. Glutamate 383 contributes to the Mg(2+) binding site.

This sequence belongs to the acetokinase family. As to quaternary structure, homodimer. Requires Mg(2+) as cofactor. Mn(2+) is required as a cofactor.

The protein resides in the cytoplasm. It catalyses the reaction acetate + ATP = acetyl phosphate + ADP. It participates in metabolic intermediate biosynthesis; acetyl-CoA biosynthesis; acetyl-CoA from acetate: step 1/2. Its function is as follows. Catalyzes the formation of acetyl phosphate from acetate and ATP. Can also catalyze the reverse reaction. The polypeptide is Acetate kinase (Streptococcus pneumoniae (strain 70585)).